The sequence spans 90 residues: Probable Fe(2+)-trafficking protein (90 aa).

Belongs to the Fe(2+)-trafficking protein family.

Could be a mediator in iron transactions between iron acquisition and iron-requiring processes, such as synthesis and/or repair of Fe-S clusters in biosynthetic enzymes. The chain is Probable Fe(2+)-trafficking protein from Leptothrix cholodnii (strain ATCC 51168 / LMG 8142 / SP-6) (Leptothrix discophora (strain SP-6)).